The primary structure comprises 1381 residues: MKAPAVLAPGILVLLFTLVQRSNGECKEALTKSEMNVNMKYQLPNFTAETPIQNVVLHEHHIFLGATNYIYVLNEEDLQKVAEHRTGPVLEHPDCFPCQDCSSKANLSGGVWKDNINMALVVDTYYDDQLISCGSVNRGTCQRHVFPHNHTADIQSDVHCIFSPQIEEPSQCPDCVVSALGTKVLLSVKDRFLNFFVGNTVNSSYFPDHSLHSISVRRLKETKNGFMFLTDQSYVDVLPEFRDSYPIKYVHAFESNNFIYFLTVQRETLNAQTFHTRIIRFCSINSALHSYMEMPLECILTEKRKKRSTKKEVFNILQAAYVSKPGAQLARQIGASLNDDILFGVFAQSKPDSAEPMDRSAVCAFPIKYVNDFFNKIVNKNNVRCLQHFYGPNHEHCFNRTFQRNLLGCEARRDEYRTEFTTALQRIDLFAGQFNKVLLTSISTFVKGDLTIANLGTSEGRFIQIVVSRSVPSTPHVNFLLDSHPVSPEVIVEQPLNQDGYTLVVTGKKITKIPLNGLGCRHFQSCSQCLSAPSFVQCGWCHDKCVRSEECSSGTWTQETCLPAIYKVFPTSAPLEGGTRLTICGWDFGFRRNNKFDLKKTRVLLGNESCTLTSSESTMNTLKCTIGPAMNEHFNMSIIISNSHGTTQYSTFSYVDPIITSISPRYGPMSGGTLLTLTGNYLNSGNSRHISIGGKTCTLKSVSNSILECYTPAQTISTEFPVKLKIDLANRETSIFSYLEDPIVYEIHPTKSFISGGSTITGIGKNLNSVSVPRMVINLHEARRNFTVACQHRSNSEIICCTTPSLQQLNLQLPLKTKAFFMLDGILSKYFDLIYVHNPVFKPFEKPVMISMGNENVLEIKGNDIDPEAVKGEVLKVGNKSCENIHLHSEAVLCTVPSDLLKLNSELNIEWKQAISSTVLGKVIVQPDQNFTGLIAGVVSISIALLLLLAFFLWLKKRKQIKDLGSELVRYDARVHTPHLDRLVSARSVSPTTEMVSNESVDYRATFPEDQFPNSSQNGSCRQVQYPLPDMSPILTSGDSDISSPLLQNTVHIDLSALNPELVQAVQHVVIGPSSLIVHFNEVIGRGHFGCVYHGTLLDNDGKKIHCAVKSLNRITDIGEVSQFLTEGIIMKDFSHPNVLSLLGICLRSEGSPLVVLPYMKHGDLRNFIRNETHNPTVKDLIGFGLQVAKGMKYLASKKFVHRDLAARNCMLDEKFTVKVADFGLARDMYDKEYYSVHNKTGAKLPVKWMALESLQTQKFTTKSDVWSFGVLLWELMTRGAPPYPDVNTFDITVYLLQGRRLLQPEYCPDPLYEVMLKCWHPKAEMRPSFSELVSRISAIFSTFIGEHYVHVNATYVNVKCVAPYPSLLSSQDNADGEVDT.

Positions Met-1–Gly-24 are cleaved as a signal peptide. Topologically, residues Glu-25 to Leu-934 are extracellular. One can recognise a Sema domain in the interval Lys-27 to Leu-515. Asn-45 is a glycosylation site (N-linked (GlcNAc...) asparagine). 4 disulfide bridges follow: Cys-95-Cys-101, Cys-98-Cys-160, Cys-133-Cys-141, and Cys-172-Cys-175. An N-linked (GlcNAc...) asparagine glycan is attached at Asn-106. Asn-149 is a glycosylation site (N-linked (GlcNAc...) asparagine). An N-linked (GlcNAc...) asparagine glycan is attached at Asn-202. 2 disulfide bridges follow: Cys-298/Cys-363 and Cys-385/Cys-397. Residue Asn-399 is glycosylated (N-linked (GlcNAc...) asparagine). 4 disulfides stabilise this stretch: Cys-520-Cys-538, Cys-526-Cys-561, Cys-529-Cys-545, and Cys-541-Cys-551. IPT/TIG domains follow at residues Pro-563–Val-655, Pro-657–Leu-739, and Pro-742–Val-836. Thr-582 carries O-linked (Man) threonine glycosylation. N-linked (GlcNAc...) asparagine glycans are attached at residues Asn-607 and Asn-635. O-linked (Man) threonine glycans are attached at residues Thr-676 and Thr-761. 3 N-linked (GlcNAc...) asparagine glycosylation sites follow: Asn-785, Asn-879, and Asn-930. The chain crosses the membrane as a helical span at residues Ile-935–Leu-955. The Cytoplasmic portion of the chain corresponds to Lys-956–Thr-1381. At Ser-966 the chain carries Phosphoserine. Thr-977 carries the phosphothreonine modification. 3 positions are modified to phosphoserine: Ser-990, Ser-997, and Ser-1000. Tyr-1003 bears the Phosphotyrosine mark. Residues Val-1078–Ile-1345 form the Protein kinase domain. ATP-binding positions include Ile-1084 to Val-1092 and Lys-1110. Asp-1204 (proton acceptor) is an active-site residue. The interaction with RANBP9 stretch occupies residues Leu-1212 to Thr-1381. Tyr-1230 is modified (phosphotyrosine). Phosphotyrosine; by autocatalysis occurs at positions 1234 and 1235. Thr-1289 carries the phosphothreonine modification. The interval Trp-1320 to Val-1359 is interaction with MUC20. Phosphotyrosine; by autocatalysis is present on residues Tyr-1349 and Tyr-1356. Position 1365 is a phosphotyrosine (Tyr-1365).

Belongs to the protein kinase superfamily. Tyr protein kinase family. In terms of assembly, heterodimer made of an alpha chain (50 kDa) and a beta chain (145 kDa) which are disulfide linked. Binds PLXNB1. Interacts when phosphorylated with downstream effectors including STAT3, PIK3R1, SRC, PCLG1, GRB2 and GAB1. Interacts with SPSB1, SPSB2 and SPSB4. Interacts with INPP5D/SHIP1. When phosphorylated at Tyr-1356, interacts with INPPL1/SHIP2. Interacts with RANBP9 and RANBP10, as well as SPSB1, SPSB2, SPSB3 and SPSB4. SPSB1 binding occurs in the presence and in the absence of HGF, however HGF treatment has a positive effect on this interaction. Interacts with MUC20; prevents interaction with GRB2 and suppresses hepatocyte growth factor-induced cell proliferation. Interacts with GRB10. Interacts with PTPN1 and PTPN2. Interacts with HSP90AA1 and HSP90AB1; the interaction suppresses MET kinase activity. Interacts with tensin TNS3. Interacts (when phosphorylated) with tensin TNS4 (via SH2 domain); the interaction increases MET protein stability by inhibiting MET endocytosis and subsequent lysosomal degradation. Post-translationally, autophosphorylated in response to ligand binding on Tyr-1234 and Tyr-1235 in the kinase domain leading to further phosphorylation of Tyr-1349 and Tyr-1356 in the C-terminal multifunctional docking site. Dephosphorylated by PTPRJ at Tyr-1349 and Tyr-1365. Dephosphorylated by PTPN1 and PTPN2. Ubiquitinated. Ubiquitination by CBL regulates the receptor stability and activity through proteasomal degradation. In terms of processing, O-mannosylation of IPT/TIG domains by TMEM260 is required for protein maturation. O-mannosylated residues are composed of single mannose glycans that are not elongated or modified.

The protein resides in the membrane. The catalysed reaction is L-tyrosyl-[protein] + ATP = O-phospho-L-tyrosyl-[protein] + ADP + H(+). In its inactive state, the C-terminal tail interacts with the catalytic domain and inhibits the kinase activity. Upon ligand binding, the C-terminal tail is displaced and becomes phosphorylated, thus increasing the kinase activity. Its function is as follows. Receptor tyrosine kinase that transduces signals from the extracellular matrix into the cytoplasm by binding to hepatocyte growth factor/HGF ligand. Regulates many physiological processes including proliferation, scattering, morphogenesis and survival. Ligand binding at the cell surface induces autophosphorylation of MET on its intracellular domain that provides docking sites for downstream signaling molecules. Following activation by ligand, interacts with the PI3-kinase subunit PIK3R1, PLCG1, SRC, GRB2, STAT3 or the adapter GAB1. Recruitment of these downstream effectors by MET leads to the activation of several signaling cascades including the RAS-ERK, PI3 kinase-AKT, or PLCgamma-PKC. The RAS-ERK activation is associated with the morphogenetic effects while PI3K/AKT coordinates prosurvival effects. During embryonic development, MET signaling plays a role in gastrulation, development and migration of muscles and neuronal precursors, angiogenesis and kidney formation. In adults, participates in wound healing as well as organ regeneration and tissue remodeling. Also promotes differentiation and proliferation of hematopoietic cells. The polypeptide is Hepatocyte growth factor receptor (MET) (Plecturocebus moloch (Dusky titi monkey)).